A 132-amino-acid polypeptide reads, in one-letter code: ATP synthase epsilon chain, cyanelle (132 aa).

It belongs to the ATPase epsilon chain family. In terms of assembly, F-type ATPases have 2 components, CF(1) - the catalytic core - and CF(0) - the membrane proton channel. CF(1) has five subunits: alpha(3), beta(3), gamma(1), delta(1), epsilon(1). CF(0) has three main subunits: a, b and c.

It localises to the plastid. The protein localises to the cyanelle thylakoid membrane. In terms of biological role, produces ATP from ADP in the presence of a proton gradient across the membrane. This chain is ATP synthase epsilon chain, cyanelle, found in Cyanophora paradoxa.